Consider the following 1232-residue polypeptide: MTVTPHVGGPLEELLERSGRFFTPGEFSADLRTVTRRGGREGDVFYRDRWSHDKVVRSTHGVNCTGSCSWKIYVKDGIITWETQQTDYPSVGPDRPEYEPRGCPRGASFSWYSYSPTRVRYPYARGVLVEMYREAKTRLGDPVLAWADIQADPERRRRYQQARGKGGLVRVSWAEASEMVAAAHVHTIKTYGPDRVAGFSPIPAMSMVSHAAGSRFVELIGGVMTSFYDWYADLPVASPQVFGDQTDVPESGDWWDASYLVMWGSNVPITRTPDAHWMAEARYRGAKVVVVSPDYADNTKFADEWVRCAAGTDTALAMAMGHVILSECYVRNQVPFFVDYVRRYTDLPFLIKLEKRGDLLVPGKFLTAADIGEESENAAFKPALLDELTNTVVVPQGSLGFRFGEDGVGKWNLDLGSVVPALSVEMDKAVNGDRSAELVTLPSFDTIDGHGETVSRGVPVRRAGKHLVCTVFDLMLAHYGVARAGLPGEWPTGYHDRTQQNTPAWQESITGVPAAQAIRFAKEFARNATESGGRSMIIMGGGICHWFHSDVMYRSVLALLMLTGSMGRNGGGWAHYVGQEKVRPLTGWQTMAMATDWSRPPRQVPGASYWYAHTDQWRYDGYGADKLASPVGRGRFAGKHTMDLLTSATAMGWSPFYPQFDRSSLDVADEARAAGRDVGDYVAEQLAQHKLKLSITDPDNPVNWPRVLTVWRANLIGSSGKGGEYFLRHLLGTDSNVQSDPPTDGVHPRDVVWDSDIPEGKLDLIMSIDFRMTSTTLVSDVVLPAATWYEKSDLSSTDMHPYVHSFSPAIDPPWETRSDFDAFAAIARAFSALAKRHLGTRTDVVLTALQHDTPDEMAYPDGTERDWLATGEVPVPGRTMSKLTVVERDYTAIYDKWLTLGPLIDQFGMTTKGYTVHPFREVSELAANFGVMNSGVAVGRPAITTAKRMADVILALSGTCNGRLAVEGFLELEKRTGQRLAHLAEGSEERRITYADTQARPVPVITSPEWSGSESGGRRYAPFTINIEHLKPFHTLTGRMHFYLAHDWVEELGEQLPVYRPPLDMARLFNQPELGPTDDGLGLTVRYLTPHSKWSFHSTYQDNLYMLSLSRGGPTMWMSPGDAAKINVRDNDWVEAVNANGIYVCRAIVSHRMPEGVVFVYHVQERTVDTPRTETNGKRGGNHNALTRVRIKPSHLAGGYGQHAFAFNYLGPTGNQRDEVTVVRRRSQEVRY.

One can recognise a 4Fe-4S Mo/W bis-MGD-type domain in the interval D53–T117. Residues H60, C64, C68, and C103 each contribute to the [4Fe-4S] cluster site. D233 lines the Mo-bis(molybdopterin guanine dinucleotide) pocket.

The protein belongs to the prokaryotic molybdopterin-containing oxidoreductase family. [4Fe-4S] cluster is required as a cofactor. It depends on Mo-bis(molybdopterin guanine dinucleotide) as a cofactor.

It localises to the cell membrane. The enzyme catalyses nitrate + a quinol = a quinone + nitrite + H2O. Its function is as follows. The alpha chain is the actual site of nitrate reduction. This Mycobacterium tuberculosis (strain CDC 1551 / Oshkosh) protein is Nitrate reductase alpha subunit (narG).